The primary structure comprises 98 residues: Citrate lyase acyl carrier protein (98 aa).

Position 14 is an O-(phosphoribosyl dephospho-coenzyme A)serine (Ser14).

It belongs to the CitD family. Oligomer with a subunit composition of (alpha,beta,gamma)6.

Its subcellular location is the cytoplasm. Its function is as follows. Covalent carrier of the coenzyme of citrate lyase. This Albidiferax ferrireducens (strain ATCC BAA-621 / DSM 15236 / T118) (Rhodoferax ferrireducens) protein is Citrate lyase acyl carrier protein.